The chain runs to 301 residues: 3-methyl-2-oxobutanoate hydroxymethyltransferase (301 aa).

The segment covering 1–12 has biased composition (polar residues); sequence MAPSNLPESTTP. The tract at residues 1–24 is disordered; the sequence is MAPSNLPESTTPAEVPAPYGTGPA. Mg(2+)-binding residues include Asp82 and Asp121. 3-methyl-2-oxobutanoate is bound by residues 82 to 83, Asp121, and Lys151; that span reads DS. Glu153 lines the Mg(2+) pocket. The Proton acceptor role is filled by Glu219.

This sequence belongs to the PanB family. Homodecamer; pentamer of dimers. Requires Mg(2+) as cofactor.

The protein resides in the cytoplasm. It catalyses the reaction 3-methyl-2-oxobutanoate + (6R)-5,10-methylene-5,6,7,8-tetrahydrofolate + H2O = 2-dehydropantoate + (6S)-5,6,7,8-tetrahydrofolate. It participates in cofactor biosynthesis; (R)-pantothenate biosynthesis; (R)-pantoate from 3-methyl-2-oxobutanoate: step 1/2. In terms of biological role, catalyzes the reversible reaction in which hydroxymethyl group from 5,10-methylenetetrahydrofolate is transferred onto alpha-ketoisovalerate to form ketopantoate. This Paenarthrobacter aurescens (strain TC1) protein is 3-methyl-2-oxobutanoate hydroxymethyltransferase.